Consider the following 228-residue polypeptide: Thermonuclease (228 aa).

A signal peptide spans 1–23 (MTEYLLSAGICMAIVSILLIGMA). A propeptide spanning residues 24 to 60 (ISNVSKGQYAKRFFYFATSCLVLTLVVVSSLSSSANA) is cleaved from the precursor. The segment covering 58 to 70 (ANASQTDNGVNRS) has biased composition (polar residues). The interval 58–83 (ANASQTDNGVNRSGSEDPTVYSATST) is disordered. A Ca(2+)-binding site is contributed by Asp-100. Arg-114 is a catalytic residue. Residues Asp-119 and Thr-120 each contribute to the Ca(2+) site. Catalysis depends on residues Glu-122 and Arg-166.

It belongs to the thermonuclease family. The cofactor is Ca(2+).

Its subcellular location is the secreted. It catalyses the reaction Endonucleolytic cleavage to nucleoside 3'-phosphates and 3'-phosphooligonucleotide end-products.. Functionally, enzyme that catalyzes the hydrolysis of both DNA and RNA at the 5' position of the phosphodiester bond. In Staphylococcus aureus (strain COL), this protein is Thermonuclease (nuc).